Here is a 460-residue protein sequence, read N- to C-terminus: UDP-N-acetylmuramoylalanine--D-glutamate ligase (460 aa).

115 to 121 (GTDGKTT) is a binding site for ATP.

This sequence belongs to the MurCDEF family.

The protein localises to the cytoplasm. The enzyme catalyses UDP-N-acetyl-alpha-D-muramoyl-L-alanine + D-glutamate + ATP = UDP-N-acetyl-alpha-D-muramoyl-L-alanyl-D-glutamate + ADP + phosphate + H(+). Its pathway is cell wall biogenesis; peptidoglycan biosynthesis. Functionally, cell wall formation. Catalyzes the addition of glutamate to the nucleotide precursor UDP-N-acetylmuramoyl-L-alanine (UMA). The polypeptide is UDP-N-acetylmuramoylalanine--D-glutamate ligase (Chlorobium luteolum (strain DSM 273 / BCRC 81028 / 2530) (Pelodictyon luteolum)).